The primary structure comprises 253 residues: Phosphate import ATP-binding protein PstB 3 (253 aa).

Residues 8-248 (LVINNLDLYY…PQDERTENYI (241 aa)) enclose the ABC transporter domain. An ATP-binding site is contributed by 40 to 47 (GPSGCGKS).

This sequence belongs to the ABC transporter superfamily. Phosphate importer (TC 3.A.1.7) family. The complex is composed of two ATP-binding proteins (PstB), two transmembrane proteins (PstC and PstA) and a solute-binding protein (PstS).

It is found in the cell membrane. The enzyme catalyses phosphate(out) + ATP + H2O = ADP + 2 phosphate(in) + H(+). Functionally, part of the ABC transporter complex PstSACB involved in phosphate import. Responsible for energy coupling to the transport system. The sequence is that of Phosphate import ATP-binding protein PstB 3 from Streptococcus agalactiae serotype III (strain NEM316).